We begin with the raw amino-acid sequence, 385 residues long: Acyl-CoA dehydrogenase IpdE1 (385 aa).

FAD is bound by residues 126–129 (QGYS) and S161. E244 acts as the Proton acceptor in catalysis. 364–366 (SNE) contributes to the FAD binding site.

The protein belongs to the acyl-CoA dehydrogenase family. In terms of assembly, heterotetramer composed of 2 IpdE1 subunits and 2 IpdE2 subunits. FAD is required as a cofactor.

It catalyses the reaction 3-[(3aS,4S,5R,7aS)-5-hydroxy-7a-methyl-1-oxo-octahydro-1H-inden-4-yl]propanoyl-CoA + A = (2E)-3-[(3aS,4S,5R,7aS)-5-hydroxy-7a-methyl-1-oxo-octahydro-1H-inden-4-yl]prop-2-enoyl-CoA + AH2. The protein operates within steroid metabolism; cholesterol degradation. Functionally, involved in cholesterol degradation. Catalyzes the dehydrogenation of 5OH-HIP-CoA to 5OH-HIPE-CoA. Can also use octanoyl-CoA and dihydroferuloyl-CoA, with lower efficiency. Cannot use 3-oxo-4-pregnene-20-carboxyl-CoA (3-OPC-CoA). This chain is Acyl-CoA dehydrogenase IpdE1, found in Mycobacterium tuberculosis (strain ATCC 25618 / H37Rv).